We begin with the raw amino-acid sequence, 1215 residues long: Kinesin-like protein KIN-7I (1215 aa).

The 325-residue stretch at 3 to 327 (RIHVAVRARP…LQFASRALRV (325 aa)) folds into the Kinesin motor domain. 79 to 86 (GQTNSGKT) serves as a coordination point for ATP. 4 coiled-coil regions span residues 333–414 (VNEI…IENL), 571–646 (ESEA…AAYE), 708–855 (IRDY…KRDS), and 894–979 (DMEA…KEDM).

It belongs to the TRAFAC class myosin-kinesin ATPase superfamily. Kinesin family. KIN-7 subfamily.

This is Kinesin-like protein KIN-7I from Oryza sativa subsp. japonica (Rice).